Here is a 418-residue protein sequence, read N- to C-terminus: Putative ion-transport protein YfeO (418 aa).

12 helical membrane passes run 10–30 (LLLS…LIVV), 54–74 (DSPL…GLVI), 99–119 (ALPG…SLGP), 120–140 (EHPI…RLLP), 149–169 (ILAS…AALI), 186–206 (LFAP…FFHP), 223–243 (ILSG…AVWC), 258–278 (VLVL…GGPV), 300–320 (DYFL…ASGF), 322–342 (GGRI…LHEH), 343–363 (VPAV…VLVV), and 371–391 (LFMA…CIVM).

It belongs to the chloride channel (TC 2.A.49) family.

It localises to the cell membrane. The sequence is that of Putative ion-transport protein YfeO from Escherichia coli O8 (strain IAI1).